Reading from the N-terminus, the 428-residue chain is Adenylosuccinate synthetase (428 aa).

Residues 12–18 (GDEGKGK) and 40–42 (GHT) contribute to the GTP site. D13 functions as the Proton acceptor in the catalytic mechanism. 2 residues coordinate Mg(2+): D13 and G40. Residues 13–16 (DEGK), 38–41 (NAGH), T131, R145, Q226, T241, and R305 each bind IMP. The Proton donor role is filled by H41. Position 301 to 307 (301 to 307 (ATTGRKR)) interacts with substrate. GTP contacts are provided by residues R307, 333-335 (KLD), and 415-417 (SVG).

Belongs to the adenylosuccinate synthetase family. In terms of assembly, homodimer. It depends on Mg(2+) as a cofactor.

Its subcellular location is the cytoplasm. It carries out the reaction IMP + L-aspartate + GTP = N(6)-(1,2-dicarboxyethyl)-AMP + GDP + phosphate + 2 H(+). The protein operates within purine metabolism; AMP biosynthesis via de novo pathway; AMP from IMP: step 1/2. Its function is as follows. Plays an important role in the de novo pathway of purine nucleotide biosynthesis. Catalyzes the first committed step in the biosynthesis of AMP from IMP. In Nitratidesulfovibrio vulgaris (strain DSM 19637 / Miyazaki F) (Desulfovibrio vulgaris), this protein is Adenylosuccinate synthetase.